The following is a 128-amino-acid chain: Large ribosomal subunit protein eL22 (128 aa).

T62 carries the phosphothreonine modification. Position 66 is a phosphoserine (S66). K69 bears the N6-succinyllysine mark.

Belongs to the eukaryotic ribosomal protein eL22 family. As to quaternary structure, component of the large ribosomal subunit.

The protein resides in the cytoplasm. In terms of biological role, component of the large ribosomal subunit. The ribosome is a large ribonucleoprotein complex responsible for the synthesis of proteins in the cell. The chain is Large ribosomal subunit protein eL22 (Rpl22) from Rattus norvegicus (Rat).